A 974-amino-acid chain; its full sequence is ATP-dependent RNA helicase DBP7 (974 aa).

The segment at 1–135 (MDDNDDGLML…SSAASSSRKA (135 aa)) is disordered. The segment covering 13 to 24 (AAPAAGSASVSS) has biased composition (low complexity). The segment covering 25–48 (KRSKQTAKARFAQKRTAHQLRKQA) has biased composition (basic residues). Low complexity-rich tracts occupy residues 67-85 (PASARLSPAPASANESPAA), 92-102 (ATSTSSAALSA), and 118-133 (TSRSSQTTSSAASSSR). The Q motif signature appears at 200–230 (SDFASCGLDPLLVYHLASKMNIGSNPTAIQK). Positions 236 to 477 (LLHPGLDRDI…GKTLVNPKII (242 aa)) constitute a Helicase ATP-binding domain. 249 to 256 (AQTGSGKT) contributes to the ATP binding site. Residues 381-384 (DEAD) carry the DEAD box motif. The region spanning 531 to 747 (LLRSYISRAR…TRKITPASIE (217 aa)) is the Helicase C-terminal domain. Residues 836–887 (KSSAIGASSTPASSHETTNKKRMRIAPDTAESDSSSDSSDDAGSDYESHSNK) form a disordered region. A compositionally biased stretch (polar residues) spans 840-851 (IGASSTPASSHE).

It belongs to the DEAD box helicase family. DDX31/DBP7 subfamily.

The protein resides in the nucleus. The protein localises to the nucleolus. It catalyses the reaction ATP + H2O = ADP + phosphate + H(+). In terms of biological role, ATP-binding RNA helicase involved in the biogenesis of 60S ribosomal subunits and is required for the normal formation of 25S and 5.8S rRNAs. This Mycosarcoma maydis (Corn smut fungus) protein is ATP-dependent RNA helicase DBP7 (DBP7).